The primary structure comprises 667 residues: Probable endo-1,3(4)-beta-glucanase AFLA_105200 (667 aa).

A signal peptide spans 1–24 (MSSSSFVWTVGSIALSSLITPTIA). Residues 25-288 (DGSGSRYQLT…WAGGVFGDSG (264 aa)) form the GH16 domain. N63 carries N-linked (GlcNAc...) asparagine glycosylation. E144 (nucleophile) is an active-site residue. E149 acts as the Proton donor in catalysis. 2 stretches are compositionally biased toward polar residues: residues 354-363 (VPSVTSTPIL) and 379-394 (ATSS…QTSV). Disordered regions lie at residues 354-427 (VPSV…ADAV) and 448-646 (GTIQ…AGAS). Low complexity-rich tracts occupy residues 395 to 427 (AGAE…ADAV), 448 to 483 (GTIQ…SQEP), and 574 to 622 (APTS…EATA). The segment covering 623–637 (PTETDSGASTGTNPE) has biased composition (polar residues). G644 carries the GPI-anchor amidated glycine lipid modification. Residues 645–667 (ASKSVGISGLAGIVCGIAMAMLA) constitute a propeptide, removed in mature form.

It belongs to the glycosyl hydrolase 16 family.

The protein resides in the cell membrane. The enzyme catalyses Endohydrolysis of (1-&gt;3)- or (1-&gt;4)-linkages in beta-D-glucans when the glucose residue whose reducing group is involved in the linkage to be hydrolyzed is itself substituted at C-3.. In terms of biological role, mixed-linked glucanase involved in the degradation of complex natural cellulosic substrates. The polypeptide is Probable endo-1,3(4)-beta-glucanase AFLA_105200 (Aspergillus flavus (strain ATCC 200026 / FGSC A1120 / IAM 13836 / NRRL 3357 / JCM 12722 / SRRC 167)).